Reading from the N-terminus, the 636-residue chain is MGRLLDTIDSPTDLKKVPVEQLPALCQEIREQIIQTCARNGGHLGSSLGAVEINVALHHVFSSPQDKLVWDVGHQAYAHKLLTGRREAFRTIRTEGGLAGFPERHESAHDAFGVGHASTAISAALGMIEAKRVTGEPGKVVAVVGDGAMTGGVAFEGLNQAGYLGRNLLVVLNDNEMSISPNVGALSEWFSKKFASRTYNRWRRQVKEFLESVPKGPEAIEIIRHGINATKALVTPGILFEGLGFHYVGPVDGHDVKGLVETFQKLAIFDGPVLLHAITTKGKGYHPAESDKATRGHGLSFFDVATGKPVKKSPGAKAYTDLFAEALCEEMEHDPRVVAITAAMLEGTGLIKAKQRFPDRTYDVGIAEQHAVTFAAGLACEGIRPVVAIYSTFLQRAYDQIIHDVALQKLPVTFALDRGGLVGADGKTHQGAFDLAYLRCVPGLVVMAPSDENELRHMLHTSLQHDGPAALRYPRGAGEGVALEPARVLEIGKGRLARNVPGKPDVCVVAAGTTLKAALAAAEALAAEGVAATVVDPRFVKPLDEELICAEAGRAKRVVTVEEGCLAGGFGTACLEAFERRGLLEAGLGVRRLGIPDEFITHAEQAKQRAWVGIDADAIAAACRALVGDRKARGVA.

Residues H74 and G115–A117 each bind thiamine diphosphate. D146 is a binding site for Mg(2+). Residues G147–A148, N175, Y285, and E368 each bind thiamine diphosphate. N175 is a Mg(2+) binding site.

This sequence belongs to the transketolase family. DXPS subfamily. In terms of assembly, homodimer. It depends on Mg(2+) as a cofactor. Thiamine diphosphate serves as cofactor.

The enzyme catalyses D-glyceraldehyde 3-phosphate + pyruvate + H(+) = 1-deoxy-D-xylulose 5-phosphate + CO2. It participates in metabolic intermediate biosynthesis; 1-deoxy-D-xylulose 5-phosphate biosynthesis; 1-deoxy-D-xylulose 5-phosphate from D-glyceraldehyde 3-phosphate and pyruvate: step 1/1. Catalyzes the acyloin condensation reaction between C atoms 2 and 3 of pyruvate and glyceraldehyde 3-phosphate to yield 1-deoxy-D-xylulose-5-phosphate (DXP). This Anaeromyxobacter dehalogenans (strain 2CP-1 / ATCC BAA-258) protein is 1-deoxy-D-xylulose-5-phosphate synthase.